The following is a 556-amino-acid chain: Jerky protein homolog (556 aa).

The 52-residue stretch at 11–62 (RGEKRKRVVLTLKEKIDICTRLEKGESRKALMQEYNVGMSTLYDIRAHKAQL) folds into the HTH psq-type domain. 2 consecutive DNA-binding regions (H-T-H motif) follow at residues 38 to 58 (RKALMQEYNVGMSTLYDIRAH) and 110 to 142 (PMLIEKAKDFYEQMQLTEPCVFSGGWLWRFKAR). The HTH CENPB-type domain maps to 77-149 (QRRTLHTPKL…KARHGIKKLD (73 aa)). The DDE-1 domain occupies 213–382 (KDRLTVLMCA…VPSHVFRRAW (170 aa)). Serine 414 is modified (phosphoserine). A disordered region spans residues 439-482 (SWGVAGREAEGGRPPAATSPAEVVWSSEKTPKADQDGRGDPGEG). The span at 467–479 (KTPKADQDGRGDP) shows a compositional bias: basic and acidic residues.

This sequence belongs to the tigger transposable element derived protein family. In terms of tissue distribution, expressed ubiquitously.

It localises to the nucleus. In terms of biological role, may bind DNA. The chain is Jerky protein homolog from Homo sapiens (Human).